We begin with the raw amino-acid sequence, 492 residues long: Ribose import ATP-binding protein RbsA (492 aa).

ABC transporter domains follow at residues 3-239 and 238-492; these read IDMR…VGRK and RKLE…TGGK. 35–42 is a binding site for ATP; that stretch reads GENGAGKS.

The protein belongs to the ABC transporter superfamily. Ribose importer (TC 3.A.1.2.1) family. The complex is composed of an ATP-binding protein (RbsA), two transmembrane proteins (RbsC) and a solute-binding protein (RbsB).

It is found in the cell membrane. It catalyses the reaction D-ribose(out) + ATP + H2O = D-ribose(in) + ADP + phosphate + H(+). In terms of biological role, part of the ABC transporter complex RbsABC involved in ribose import. Responsible for energy coupling to the transport system. The polypeptide is Ribose import ATP-binding protein RbsA (Streptococcus agalactiae serotype III (strain NEM316)).